Consider the following 442-residue polypeptide: Yes-associated protein homolog 1 (442 aa).

Residues 1–10 are compositionally biased toward basic residues; the sequence is MASKSIHKKH. The tract at residues 1–84 is disordered; that stretch reads MASKSIHKKH…GSVDESSRTA (84 aa). 2 stretches are compositionally biased toward polar residues: residues 13–22 and 55–71; these read NSQQDKNQFS and LPSSYYHQKRNPGSSAH. Position 104 is a phosphoserine (S104). Residues 108 to 120 are compositionally biased toward polar residues; that stretch reads LHTSVNNGQSSAT. The disordered stretch occupies residues 108–136; that stretch reads LHTSVNNGQSSATVPHPSHHNVHHQHSKS. A compositionally biased stretch (basic residues) spans 124–134; the sequence is PSHHNVHHQHS. Positions 203-236 constitute a WW domain; that stretch reads LPMPQGWEMCYDSDGVRYFKDHNSKTTTWDDPRL.

It belongs to the YAP1 family. Highly divergent. In terms of assembly, interacts (via WW domain) with wts-1 (via N-terminus). Interacts (via WW domain) with egl-44; the interaction may regulate transcription. In terms of tissue distribution, expressed in epithelia, hypodermis, muscles, pharynx, intestine, gonadal sheath cells, vulva, spermatheca and in excretory tissue.

The protein localises to the cytoplasm. It localises to the nucleus. The protein resides in the cell projection. Its subcellular location is the cilium. It is found in the cytoskeleton. The protein localises to the cilium axoneme. In terms of biological role, plays a role in thermal stress response and in aging. The sequence is that of Yes-associated protein homolog 1 from Caenorhabditis elegans.